A 351-amino-acid chain; its full sequence is Ribosomal RNA large subunit methyltransferase M (351 aa).

S-adenosyl-L-methionine is bound by residues Ser186, 219-222 (APGG), Asp238, Asp258, and Asp274. The active-site Proton acceptor is Lys303.

The protein belongs to the class I-like SAM-binding methyltransferase superfamily. RNA methyltransferase RlmE family. RlmM subfamily. Monomer.

It localises to the cytoplasm. It catalyses the reaction cytidine(2498) in 23S rRNA + S-adenosyl-L-methionine = 2'-O-methylcytidine(2498) in 23S rRNA + S-adenosyl-L-homocysteine + H(+). In terms of biological role, catalyzes the 2'-O-methylation at nucleotide C2498 in 23S rRNA. The chain is Ribosomal RNA large subunit methyltransferase M from Xylella fastidiosa (strain M23).